A 278-amino-acid chain; its full sequence is Large ribosomal subunit protein uL2 (278 aa).

2 disordered regions span residues 29–53 (PEKSLVRPLSKTGGRNSSGRITTRH) and 223–278 (GVAM…GKKR). Residues 255 to 268 (GRTRRPGKESDKLI) show a composition bias toward basic and acidic residues. The span at 269–278 (VRRRRTGKKR) shows a compositional bias: basic residues.

The protein belongs to the universal ribosomal protein uL2 family. In terms of assembly, part of the 50S ribosomal subunit. Forms a bridge to the 30S subunit in the 70S ribosome.

One of the primary rRNA binding proteins. Required for association of the 30S and 50S subunits to form the 70S ribosome, for tRNA binding and peptide bond formation. It has been suggested to have peptidyltransferase activity; this is somewhat controversial. Makes several contacts with the 16S rRNA in the 70S ribosome. The polypeptide is Large ribosomal subunit protein uL2 (Kineococcus radiotolerans (strain ATCC BAA-149 / DSM 14245 / SRS30216)).